A 160-amino-acid chain; its full sequence is Transcription elongation factor GreA (160 aa).

Belongs to the GreA/GreB family.

In terms of biological role, necessary for efficient RNA polymerase transcription elongation past template-encoded arresting sites. The arresting sites in DNA have the property of trapping a certain fraction of elongating RNA polymerases that pass through, resulting in locked ternary complexes. Cleavage of the nascent transcript by cleavage factors such as GreA or GreB allows the resumption of elongation from the new 3'terminus. GreA releases sequences of 2 to 3 nucleotides. This Francisella tularensis subsp. tularensis (strain FSC 198) protein is Transcription elongation factor GreA.